The following is a 484-amino-acid chain: ATP synthase subunit beta (484 aa).

Residue 162 to 169 coordinates ATP; the sequence is GGAGVGKT.

This sequence belongs to the ATPase alpha/beta chains family. In terms of assembly, F-type ATPases have 2 components, CF(1) - the catalytic core - and CF(0) - the membrane proton channel. CF(1) has five subunits: alpha(3), beta(3), gamma(1), delta(1), epsilon(1). CF(0) has four main subunits: a(1), b(1), b'(1) and c(9-12).

Its subcellular location is the cellular thylakoid membrane. It catalyses the reaction ATP + H2O + 4 H(+)(in) = ADP + phosphate + 5 H(+)(out). Its function is as follows. Produces ATP from ADP in the presence of a proton gradient across the membrane. The catalytic sites are hosted primarily by the beta subunits. This is ATP synthase subunit beta from Trichodesmium erythraeum (strain IMS101).